Here is a 203-residue protein sequence, read N- to C-terminus: MRERMHNLVPYVIEQSGGGERSYDIFSRLLKDRIIFVDGEITDAVADLVVAQLLFLESQNPDKDISLYINSPGGAVTAGLAVYDTMQHICPEVQTICLGQASSMAAVLLAGGAPGKRFALPSSRVMIHQPWGGVQGQASDVCIQAQEILRLKTLTIAYFALHTGQSEEQVREDMERDFFLSAEQACSYGIVDTVMKRRKHAQV.

The Nucleophile role is filled by Ser-103. Residue His-128 is part of the active site.

Belongs to the peptidase S14 family. Fourteen ClpP subunits assemble into 2 heptameric rings which stack back to back to give a disk-like structure with a central cavity, resembling the structure of eukaryotic proteasomes.

It localises to the cytoplasm. The enzyme catalyses Hydrolysis of proteins to small peptides in the presence of ATP and magnesium. alpha-casein is the usual test substrate. In the absence of ATP, only oligopeptides shorter than five residues are hydrolyzed (such as succinyl-Leu-Tyr-|-NHMec, and Leu-Tyr-Leu-|-Tyr-Trp, in which cleavage of the -Tyr-|-Leu- and -Tyr-|-Trp bonds also occurs).. In terms of biological role, cleaves peptides in various proteins in a process that requires ATP hydrolysis. Has a chymotrypsin-like activity. Plays a major role in the degradation of misfolded proteins. This is ATP-dependent Clp protease proteolytic subunit 1 from Treponema pallidum (strain Nichols).